A 249-amino-acid chain; its full sequence is Adenylate kinase (249 aa).

43–48 (GAGKGT) lines the ATP pocket. Positions 63 to 92 (ATGDMLRAQVAAKTALGVEAKKIMDQGGLV) are NMP. Residues threonine 64, arginine 69, 90–92 (GLV), 119–122 (GFPR), and glutamine 126 contribute to the AMP site. The segment at 160–197 (GRLVHPASGRSYHKLFNPPKKNMIDDITGEPLVQRSDD) is LID. ATP-binding positions include arginine 161 and 170–171 (SY). 2 residues coordinate AMP: arginine 194 and arginine 205. Residue glutamine 233 participates in ATP binding.

Belongs to the adenylate kinase family. AK2 subfamily. In terms of assembly, monomer.

Its subcellular location is the cytoplasm. The protein resides in the cytosol. It is found in the mitochondrion intermembrane space. It carries out the reaction AMP + ATP = 2 ADP. Its function is as follows. Catalyzes the reversible transfer of the terminal phosphate group between ATP and AMP. Plays an important role in cellular energy homeostasis and in adenine nucleotide metabolism. Adenylate kinase activity is critical for regulation of the phosphate utilization and the AMP de novo biosynthesis pathways. The polypeptide is Adenylate kinase (Scheffersomyces stipitis (strain ATCC 58785 / CBS 6054 / NBRC 10063 / NRRL Y-11545) (Yeast)).